Here is a 111-residue protein sequence, read N- to C-terminus: FK506-binding protein 1 (111 aa).

Residues 1 to 20 (MGVEKTIITQGSGPSPQVGQ) are disordered. Residues 7 to 20 (IITQGSGPSPQVGQ) show a composition bias toward polar residues. Positions 19 to 111 (GQKVTMEYTG…IFDVELKKIG (93 aa)) constitute a PPIase FKBP-type domain.

It belongs to the FKBP-type PPIase family. FKBP1 subfamily.

It is found in the cytoplasm. The enzyme catalyses [protein]-peptidylproline (omega=180) = [protein]-peptidylproline (omega=0). Inhibited by both FK506 and rapamycin. Functionally, PPIases accelerate the folding of proteins. It catalyzes the cis-trans isomerization of proline imidic peptide bonds in oligopeptides. The protein is FK506-binding protein 1 (FPR1) of Gibberella zeae (strain ATCC MYA-4620 / CBS 123657 / FGSC 9075 / NRRL 31084 / PH-1) (Wheat head blight fungus).